An 836-amino-acid polypeptide reads, in one-letter code: Neuroligin-2 (836 aa).

A signal peptide spans 1 to 14; the sequence is MWLLALCLVGLAGA. Residues 15–678 are Extracellular-facing; that stretch reads QRGGGGPGGG…DSRDYSTELS (664 aa). Residues N98 and N136 are each glycosylated (N-linked (GlcNAc...) asparagine). Disulfide bonds link C106–C141, C317–C328, and C487–C521. N-linked (GlcNAc...) asparagine glycosylation occurs at N522. Residues 623-661 form a disordered region; the sequence is PPYATRWPPRTPGPGTSGTRRPPPPATLPPESDIDLGPR. A helical membrane pass occupies residues 679–699; sequence VTVAVGASLLFLNILAFAALY. Residues 679 to 699 are required for interaction with LHFPL4; the sequence is VTVAVGASLLFLNILAFAALY. Residues 700 to 836 lie on the Cytoplasmic side of the membrane; sequence YKRDRRQELR…LPHPHSTTRV (137 aa). 2 disordered regions span residues 711-735 and 791-836; these read RRLS…TAGR and LLPS…TTRV. S714 and S719 each carry phosphoserine. The span at 717 to 728 shows a compositional bias: gly residues; it reads GGSGSGVPGGGP. The segment covering 796–819 has biased composition (pro residues); it reads LGPPPPPPPPSLHPFGPFPPPPPT. Positions 824-836 are enriched in polar residues; the sequence is NNTLPHPHSTTRV.

This sequence belongs to the type-B carboxylesterase/lipase family. Interacts with neurexins NRXN1, NRXN2 and NRXN3. Interaction with neurexins is mediated by heparan sulfate glycan modification on neurexin. Interacts (via its C-terminus) with DLG4/PSD-95 (via PDZ domain 3). Interacts with PATJ. Interacts with MDGA2. Interacts with GPHN. Interacts with MDGA1. Found in a complex with MAGI2 and IGSF9B, where it interacts with MAGI2 (via WW 1, WW 2 and PDZ 2 domains). Identified in a complex of 720 kDa composed of LHFPL4, NLGN2, GABRA1, GABRB2, GABRG2 and GABRB3. Interacts with LHFPL4; leading to mutual regulation of the protein level and synaptic clustering. Interacts with GABRA1. In terms of tissue distribution, brain and arteries. Detected in the retina outer plexiform layer (at protein level). Widely expressed. Detected in heart, brain, spleen, lung, liver, skeletal muscle, kidney and testis.

It localises to the cell membrane. It is found in the postsynaptic cell membrane. The protein localises to the presynaptic cell membrane. Transmembrane scaffolding protein involved in cell-cell interactions via its interactions with neurexin family members. Mediates cell-cell interactions both in neurons and in other types of cells, such as Langerhans beta cells. Mediates cell-cell interactions between Langerhans beta cells and modulates insulin secretion. Plays a role in synapse function and synaptic signal transmission, especially via gamma-aminobutyric acid receptors (GABA(A) receptors). Functions by recruiting and clustering synaptic proteins. Promotes clustering of postsynaptic GABRG2 and GPHN. Promotes clustering of postsynaptic LHFPL4. Modulates signaling by inhibitory synapses, and thereby plays a role in controlling the ratio of signaling by excitatory and inhibitory synapses and information processing. Required for normal signal amplitude from inhibitory synapses, but is not essential for normal signal frequency. May promote the initial formation of synapses, but is not essential for this. In vitro, triggers the de novo formation of presynaptic structures. This Mus musculus (Mouse) protein is Neuroligin-2 (Nlgn2).